We begin with the raw amino-acid sequence, 426 residues long: Dihydropyrimidine dehydrogenase (NADP(+)), chloroplastic (426 aa).

The transit peptide at 1–44 (MASMSFALNRFSGLSSKTTLSADFDPSSRRSFLPPTRVGLKISS) directs the protein to the chloroplast. The residue at position 45 (Ala-45) is an N-acetylalanine. Residues Asn-129 and 188–190 (NFS) each bind substrate. The Nucleophile role is filled by Cys-191. Residue 256-257 (NT) coordinates substrate. Residues 395-414 (VEQRKAEKRGLKSDKDWTGD) are disordered.

The protein belongs to the dihydropyrimidine dehydrogenase family. As to expression, expressed in roots, leaves, stems, siliques and flowers. Highly expressed ion dry seeds.

The protein localises to the plastid. Its subcellular location is the chloroplast. It catalyses the reaction 5,6-dihydrouracil + NADP(+) = uracil + NADPH + H(+). It participates in amino-acid biosynthesis; beta-alanine biosynthesis. In terms of biological role, involved in pyrimidine base degradation. Catalyzes the reduction of uracil to 5,6-dihydrouracil (DHU) by using NADH as a specific cosubstrate and the reduction of thymine to 5,6-dihydrothymine (DHT). Involved in the recycling of nitrogen from nucleobases to general nitrogen metabolism. This Arabidopsis thaliana (Mouse-ear cress) protein is Dihydropyrimidine dehydrogenase (NADP(+)), chloroplastic.